Reading from the N-terminus, the 793-residue chain is Phenylalanine--tRNA ligase beta subunit (793 aa).

Residues 39 to 148 (AKPFTGVVVG…EDAPVGLNIR (110 aa)) enclose the tRNA-binding domain. Residues 400-476 (PKREAIELNQ…RIHGYDNIQI (77 aa)) enclose the B5 domain. Residues D454, D460, E463, and E464 each contribute to the Mg(2+) site. The region spanning 698-791 (SRFPSVRRDI…LENTYQATLR (94 aa)) is the FDX-ACB domain.

The protein belongs to the phenylalanyl-tRNA synthetase beta subunit family. Type 1 subfamily. In terms of assembly, tetramer of two alpha and two beta subunits. The cofactor is Mg(2+).

The protein resides in the cytoplasm. The catalysed reaction is tRNA(Phe) + L-phenylalanine + ATP = L-phenylalanyl-tRNA(Phe) + AMP + diphosphate + H(+). The chain is Phenylalanine--tRNA ligase beta subunit from Acinetobacter baylyi (strain ATCC 33305 / BD413 / ADP1).